Consider the following 423-residue polypeptide: Histidine--tRNA ligase (423 aa).

It belongs to the class-II aminoacyl-tRNA synthetase family. Homodimer.

The protein localises to the cytoplasm. The catalysed reaction is tRNA(His) + L-histidine + ATP = L-histidyl-tRNA(His) + AMP + diphosphate + H(+). The chain is Histidine--tRNA ligase from Geobacillus sp. (strain WCH70).